A 148-amino-acid chain; its full sequence is Large ribosomal subunit protein uL15 (148 aa).

Positions 1–30 are enriched in basic residues; the sequence is MPSRLRKTRKLRGHVSHGHGRIGKHRKHPG. The disordered stretch occupies residues 1–37; that stretch reads MPSRLRKTRKLRGHVSHGHGRIGKHRKHPGGRGNAGG. (3S)-3-hydroxyhistidine is present on His-39. An N6-acetyllysine mark is found at Lys-47 and Lys-55. The residue at position 68 (Ser-68) is a Phosphoserine. Lys-110 carries the post-translational modification N6-acetyllysine.

It belongs to the universal ribosomal protein uL15 family. Component of the large ribosomal subunit. In terms of processing, hydroxylated on His-39 by MINA.

The protein resides in the cytoplasm. Functionally, component of the large ribosomal subunit. The ribosome is a large ribonucleoprotein complex responsible for the synthesis of proteins in the cell. In Rattus norvegicus (Rat), this protein is Large ribosomal subunit protein uL15 (Rpl27a).